A 105-amino-acid polypeptide reads, in one-letter code: Large ribosomal subunit protein uL24 (105 aa).

This sequence belongs to the universal ribosomal protein uL24 family. In terms of assembly, part of the 50S ribosomal subunit.

Its function is as follows. One of two assembly initiator proteins, it binds directly to the 5'-end of the 23S rRNA, where it nucleates assembly of the 50S subunit. Functionally, one of the proteins that surrounds the polypeptide exit tunnel on the outside of the subunit. The sequence is that of Large ribosomal subunit protein uL24 from Chromohalobacter salexigens (strain ATCC BAA-138 / DSM 3043 / CIP 106854 / NCIMB 13768 / 1H11).